The sequence spans 260 residues: HTH-type transcriptional repressor NanR (260 aa).

The disordered stretch occupies residues 1–21; that stretch reads MSAFDHSSDDTQETIGNSLRR. Positions 27 to 95 constitute an HTH gntR-type domain; it reads KKLSEMVEEE…NGERARVSRP (69 aa). The segment at residues 55–74 is a DNA-binding region (H-T-H motif); that stretch reads ERELMAFFNVGRPSVREALA.

Belongs to the NanR family.

In terms of biological role, transcriptional repressor that controls expression of the genes required for the catabolism of sialic acids. In Klebsiella aerogenes (strain ATCC 13048 / DSM 30053 / CCUG 1429 / JCM 1235 / KCTC 2190 / NBRC 13534 / NCIMB 10102 / NCTC 10006 / CDC 819-56) (Enterobacter aerogenes), this protein is HTH-type transcriptional repressor NanR.